The primary structure comprises 373 residues: Ras association domain-containing protein 7 (373 aa).

A Ras-associating domain is found at 6–89; that stretch reads AAMELKVWVD…VQFVLRRTGP (84 aa). The tract at residues 122 to 150 is disordered; the sequence is CEPRKTLTPEPAPSLSRPGPAAPVTPTPG. Coiled coils occupy residues 175–227 and 248–297; these read WEQE…AAEA and QERQ…QFIQ. The interval 300-356 is disordered; sequence GAALPPPPRPDRGPPGTQGPLPPAREESLLGAPSESHAGAQPRPRGGPHDAELLEVA.

As to quaternary structure, interacts with MAP2K7 and GTP-bound NRAS. Polyubiquitinated and degraded by the proteasome upon prolonged stress stimuli.

The protein resides in the cytoplasm. Its subcellular location is the cytoskeleton. It localises to the microtubule organizing center. It is found in the centrosome. Its function is as follows. Negatively regulates stress-induced JNK activation and apoptosis by promoting MAP2K7 phosphorylation and inhibiting its ability to activate JNK. Following prolonged stress, anti-apoptotic effect stops because of degradation of RASSF7 protein via the ubiquitin-proteasome pathway. Required for the activation of AURKB and chromosomal congression during mitosis where it stimulates microtubule polymerization. This chain is Ras association domain-containing protein 7 (RASSF7), found in Homo sapiens (Human).